Reading from the N-terminus, the 377-residue chain is Chaperone protein DnaJ (377 aa).

The region spanning 5–70 (DYYQVLGVAK…QKRAAYDQYG (66 aa)) is the J domain. Residues 137–215 (GYDTQIRVPS…CHGAGKTKET (79 aa)) form a CR-type zinc finger. Residues Cys150, Cys153, Cys167, Cys170, Cys189, Cys192, Cys203, and Cys206 each coordinate Zn(2+). 4 CXXCXGXG motif repeats span residues 150 to 157 (CEICHGSG), 167 to 174 (CPTCNGSG), 189 to 196 (CPKCHGTG), and 203 to 210 (CTHCHGAG).

The protein belongs to the DnaJ family. In terms of assembly, homodimer. Zn(2+) is required as a cofactor.

It is found in the cytoplasm. Functionally, participates actively in the response to hyperosmotic and heat shock by preventing the aggregation of stress-denatured proteins and by disaggregating proteins, also in an autonomous, DnaK-independent fashion. Unfolded proteins bind initially to DnaJ; upon interaction with the DnaJ-bound protein, DnaK hydrolyzes its bound ATP, resulting in the formation of a stable complex. GrpE releases ADP from DnaK; ATP binding to DnaK triggers the release of the substrate protein, thus completing the reaction cycle. Several rounds of ATP-dependent interactions between DnaJ, DnaK and GrpE are required for fully efficient folding. Also involved, together with DnaK and GrpE, in the DNA replication of plasmids through activation of initiation proteins. In Paraburkholderia phymatum (strain DSM 17167 / CIP 108236 / LMG 21445 / STM815) (Burkholderia phymatum), this protein is Chaperone protein DnaJ.